Consider the following 483-residue polypeptide: Beta-glucosidase 4 (483 aa).

A beta-D-glucoside-binding positions include Gln29, His131, 176-177 (NE), Tyr310, and Glu380. The active-site Proton donor is Glu177. Catalysis depends on Glu380, which acts as the Nucleophile. N-linked (GlcNAc...) asparagine glycosylation occurs at Asn398. A beta-D-glucoside-binding positions include Trp429, 436–437 (EW), and Phe445.

The protein belongs to the glycosyl hydrolase 1 family.

It catalyses the reaction Hydrolysis of terminal, non-reducing beta-D-glucosyl residues with release of beta-D-glucose.. The chain is Beta-glucosidase 4 (BGLU4) from Oryza sativa subsp. japonica (Rice).